The following is a 382-amino-acid chain: Succinate--CoA ligase [ADP-forming] subunit beta (382 aa).

The 232-residue stretch at 9–240 (KELFSKYGVK…PRDVSEFEMY (232 aa)) folds into the ATP-grasp domain. ATP is bound by residues Lys45, 52–54 (GRG), Val94, and Glu99. The Mg(2+) site is built by Asn193 and Asp207. Substrate-binding positions include Asn260 and 317–319 (GIT).

It belongs to the succinate/malate CoA ligase beta subunit family. Heterotetramer of two alpha and two beta subunits. Mg(2+) is required as a cofactor.

It carries out the reaction succinate + ATP + CoA = succinyl-CoA + ADP + phosphate. The enzyme catalyses GTP + succinate + CoA = succinyl-CoA + GDP + phosphate. The protein operates within carbohydrate metabolism; tricarboxylic acid cycle; succinate from succinyl-CoA (ligase route): step 1/1. Functionally, succinyl-CoA synthetase functions in the citric acid cycle (TCA), coupling the hydrolysis of succinyl-CoA to the synthesis of either ATP or GTP and thus represents the only step of substrate-level phosphorylation in the TCA. The beta subunit provides nucleotide specificity of the enzyme and binds the substrate succinate, while the binding sites for coenzyme A and phosphate are found in the alpha subunit. This Pyrobaculum arsenaticum (strain DSM 13514 / JCM 11321 / PZ6) protein is Succinate--CoA ligase [ADP-forming] subunit beta.